The sequence spans 277 residues: Large ribosomal subunit protein uL2 (277 aa).

Disordered stretches follow at residues 37–58 (LHSK…GGGH) and 222–277 (GVAM…NRRR). Residues 268–277 (VRRRKQNRRR) are compositionally biased toward basic residues.

Belongs to the universal ribosomal protein uL2 family. As to quaternary structure, part of the 50S ribosomal subunit. Forms a bridge to the 30S subunit in the 70S ribosome.

Functionally, one of the primary rRNA binding proteins. Required for association of the 30S and 50S subunits to form the 70S ribosome, for tRNA binding and peptide bond formation. It has been suggested to have peptidyltransferase activity; this is somewhat controversial. Makes several contacts with the 16S rRNA in the 70S ribosome. This chain is Large ribosomal subunit protein uL2, found in Parafrankia sp. (strain EAN1pec).